A 394-amino-acid chain; its full sequence is NAD(P)H-quinone oxidoreductase subunit H (394 aa).

The protein belongs to the complex I 49 kDa subunit family. As to quaternary structure, NDH-1 can be composed of about 15 different subunits; different subcomplexes with different compositions have been identified which probably have different functions.

Its subcellular location is the cellular thylakoid membrane. It catalyses the reaction a plastoquinone + NADH + (n+1) H(+)(in) = a plastoquinol + NAD(+) + n H(+)(out). It carries out the reaction a plastoquinone + NADPH + (n+1) H(+)(in) = a plastoquinol + NADP(+) + n H(+)(out). Its function is as follows. NDH-1 shuttles electrons from an unknown electron donor, via FMN and iron-sulfur (Fe-S) centers, to quinones in the respiratory and/or the photosynthetic chain. The immediate electron acceptor for the enzyme in this species is believed to be plastoquinone. Couples the redox reaction to proton translocation, and thus conserves the redox energy in a proton gradient. Cyanobacterial NDH-1 also plays a role in inorganic carbon-concentration. In Microcystis aeruginosa (strain NIES-843 / IAM M-2473), this protein is NAD(P)H-quinone oxidoreductase subunit H.